The primary structure comprises 541 residues: Cytochrome P450 monooxygenase claW (541 aa).

Residues 12 to 32 traverse the membrane as a helical segment; it reads VINALVILFSFWAFLSLIRVI. A heme-binding site is contributed by Cys480.

This sequence belongs to the cytochrome P450 family. Requires heme as cofactor.

It is found in the membrane. It functions in the pathway secondary metabolite biosynthesis; terpenoid biosynthesis. In terms of biological role, cytochrome P450 monooxygenase; part of the gene cluster that mediates the biosynthesis of clavilactone A, a meroterpenoid that features a unique benzo-fused ten-membered carbocyclic ring unit with an alpha,beta-epoxy-gamma-lactone moiety, forming an intriguing 10/5/3 tricyclic nested skeleton. Cytochrome P450 monooxygenases claO, claP, claQ, claU, and claW are close orthologs, suggesting that a redundant function or pseudogenes are present in the cla cluster. These monoxygenases are not involved in clavilactone A biosynthesis nor its modification. ClaR, ClaS and ClaT are sufficient to produce clavilactone A. The biosynthesis begins with the prenyltransferase claS that transfers geranyl pyrophosphate (GPP) to hydroquinone to produces geranylhydroquinone. The cytochrome P450 monooxygenase claR then catalyzes the diradical coupling reaction between the intramolecular hydroquinone and allyl moieties to form the benzo-fused ten-membered carbocyclic ring unit of wigantol. Finally the cytochrome P450 monooxygenase claT exquisitely and stereoselectively assembles the alpha,beta-epoxy-gamma-lactone moiety, producing clavilactone A via arnebinol A. This chain is Cytochrome P450 monooxygenase claW, found in Ampulloclitocybe clavipes (Club foot).